A 95-amino-acid chain; its full sequence is Progonadoliberin-1 (95 aa).

Residues 1–22 (MAPQTFALWLLLVGTLLGQGCC) form the signal peptide. Gln23 carries the post-translational modification Pyrrolidone carboxylic acid. The residue at position 32 (Gly32) is a Glycine amide.

The protein belongs to the GnRH family.

It localises to the secreted. Its function is as follows. Stimulates the secretion of gonadotropins. In Morone saxatilis (Striped bass), this protein is Progonadoliberin-1 (gnrh1).